We begin with the raw amino-acid sequence, 396 residues long: 2-(3-amino-3-carboxypropyl)histidine synthase subunit 1 (396 aa).

The [4Fe-4S] cluster site is built by Cys-89, Cys-194, and Cys-323. The disordered stretch occupies residues 372-396; the sequence is TNNNEANRPKREKRKPHIVVRTEAS.

This sequence belongs to the DPH1/DPH2 family. DPH1 subfamily. As to quaternary structure, component of the 2-(3-amino-3-carboxypropyl)histidine synthase complex composed of dph-1, dph-2, dph-3 and a NADH-dependent reductase. [4Fe-4S] cluster serves as cofactor.

The catalysed reaction is L-histidyl-[translation elongation factor 2] + S-adenosyl-L-methionine = 2-[(3S)-amino-3-carboxypropyl]-L-histidyl-[translation elongation factor 2] + S-methyl-5'-thioadenosine + H(+). It functions in the pathway protein modification; peptidyl-diphthamide biosynthesis. In terms of biological role, catalyzes the first step of diphthamide biosynthesis, a post-translational modification of histidine which occurs in elongation factor 2. Dph-1 and dph-2 transfer a 3-amino-3-carboxypropyl (ACP) group from S-adenosyl-L-methionine (SAM) to a histidine residue, the reaction is assisted by a reduction system comprising dph-3 and a NADH-dependent reductase. This is 2-(3-amino-3-carboxypropyl)histidine synthase subunit 1 (dph-1) from Caenorhabditis elegans.